The chain runs to 74 residues: MDAVQEFEHRITELEIQSALQEDVIAGLNAMVAELRQTLDLQQAQLRLLYQKMQDRNPDAQEPYSLRDEIPPHY.

The protein belongs to the SlyX family.

This Neisseria meningitidis serogroup A / serotype 4A (strain DSM 15465 / Z2491) protein is Protein SlyX homolog.